Consider the following 172-residue polypeptide: uncharacterized protein (172 aa).

The tract at residues 22–64 (RSVSSSPAAKQPAPGTVAQSFPPGELALRDETGGRGRGTRGIR) is disordered.

This is an uncharacterized protein from Human cytomegalovirus (strain AD169) (HHV-5).